Here is a 146-residue protein sequence, read N- to C-terminus: Hemoglobin subunit beta (146 aa).

An N-acetylvaline modification is found at Val-1. In terms of domain architecture, Globin spans 2–146 (HLSGEEKAAV…VANALAHKYH (145 aa)). The residue at position 12 (Thr-12) is a Phosphothreonine. Ser-44 is subject to Phosphoserine. Lys-59 is modified (N6-acetyllysine). Residue His-63 coordinates heme b. N6-acetyllysine is present on Lys-82. Position 92 (His-92) interacts with heme b. Cys-93 is subject to S-nitrosocysteine. Position 144 is an N6-acetyllysine (Lys-144).

It belongs to the globin family. In terms of assembly, heterotetramer of two alpha chains and two beta chains. Red blood cells.

In terms of biological role, involved in oxygen transport from the lung to the various peripheral tissues. In Tupaia glis (Common tree shrew), this protein is Hemoglobin subunit beta (HBB).